Consider the following 929-residue polypeptide: von Willebrand factor C and EGF domain-containing protein (929 aa).

Residues 1-21 (MWARLLLHVAYILIPLLGSSA) form the signal peptide. Positions 70–98 (LCSFGCGSGICIAPNVCSCQDGEQGATCP) constitute an EGF-like 1 domain. Residues 142 to 180 (DIDECLSSSCEGHCVNTEGGFVCECGPGMQLSADRHSCQ) enclose the EGF-like 2; calcium-binding domain. 9 cysteine pairs are disulfide-bonded: C146/C155, C151/C164, C166/C179, C185/C194, C190/C203, C205/C218, C224/C237, C233/C246, and C248/C261. Positions 181–219 (DTDECLGTPCQQRCKNSIGSYKCSCRAGFHLHGNRHSCI) constitute an EGF-like 3; calcium-binding domain. Residues 220–262 (DVNECRRPQERRVCHHTCHNTVGSFLCTCRPGFRLRSDRVSCE) enclose the EGF-like 4; calcium-binding domain. Disordered stretches follow at residues 291 to 317 (AGRPALSPGHSPPPGAPGYPTGVRTIS) and 339 to 374 (PSSSPLGTLGPPSLLQGAVGTPSSPRGPESPKLGAG). The segment covering 339 to 353 (PSSSPLGTLGPPSLL) has biased composition (low complexity). 6 consecutive VWFC domains span residues 376–433 (SSCW…PSCT), 433–494 (TGCF…GRCY), 491–552 (GRCY…FTCR), 558–618 (TGCS…PDCS), 619–677 (AGCT…PVCH), and 677–762 (HDCN…VNCS). 2 N-linked (GlcNAc...) asparagine glycosylation sites follow: N454 and N464. The segment at 731 to 774 (PLEEKQQPSPHGELAKAARNARGDTEVPVNCSSCPGPPSASPTR) is disordered. Positions 743-755 (ELAKAARNARGDT) are enriched in basic and acidic residues. An N-linked (GlcNAc...) asparagine glycan is attached at N787. Polar residues predominate over residues 791 to 807 (IQSASPSPPIAQTSSSP). Disordered stretches follow at residues 791–861 (IQSA…SSTF) and 879–929 (AETP…NSTI). Residues 889 to 903 (LSETLTTSSSSQRLS) are compositionally biased toward low complexity.

The protein localises to the secreted. May be a regulatory element in the beta-catenin signaling pathway and a target for chemoprevention of hapatocellular carcinoma. This Mus musculus (Mouse) protein is von Willebrand factor C and EGF domain-containing protein (Vwce).